The chain runs to 141 residues: Hemoglobin subunit alpha (141 aa).

Residues 1-141 form the Globin domain; sequence VLSAADKSNV…VSTVLTSKYR (141 aa). Ser-3 carries the post-translational modification Phosphoserine. Lys-7 and Lys-11 each carry N6-succinyllysine. The residue at position 16 (Lys-16) is an N6-acetyllysine; alternate. Lys-16 carries the post-translational modification N6-succinyllysine; alternate. Phosphotyrosine is present on Tyr-24. Ser-35 carries the post-translational modification Phosphoserine. An N6-succinyllysine modification is found at Lys-40. Ser-49 is subject to Phosphoserine. His-58 is a binding site for O2. His-87 contributes to the heme b binding site. At Ser-102 the chain carries Phosphoserine. Residue Thr-108 is modified to Phosphothreonine. Ser-124 is subject to Phosphoserine. A phosphothreonine mark is found at Thr-134 and Thr-137. Ser-138 bears the Phosphoserine mark.

This sequence belongs to the globin family. In terms of assembly, heterotetramer of two alpha chains and two beta chains. In terms of tissue distribution, red blood cells.

In terms of biological role, involved in oxygen transport from the lung to the various peripheral tissues. Hemopressin acts as an antagonist peptide of the cannabinoid receptor CNR1. Hemopressin-binding efficiently blocks cannabinoid receptor CNR1 and subsequent signaling. The sequence is that of Hemoglobin subunit alpha (HBA) from Felis catus (Cat).